The primary structure comprises 353 residues: Ornithine racemase (353 aa).

Residue Lys-35 is the Proton acceptor of the active site. N6-(pyridoxal phosphate)lysine is present on Lys-35. Arg-128 is a substrate binding site.

This sequence belongs to the alanine racemase family. In terms of assembly, homodimer. Requires pyridoxal 5'-phosphate as cofactor.

It carries out the reaction L-ornithine = D-ornithine. Involved in the ornithine fermentation pathway. Catalyzes the conversion of L-ornithine to D-ornithine. OR could also racemize basic amino acids such as lysine and arginine. Serine, asparagine and alanine could be also converted by OR, but at a lower rate. The polypeptide is Ornithine racemase (Acetoanaerobium sticklandii (strain ATCC 12662 / DSM 519 / JCM 1433 / CCUG 9281 / NCIMB 10654 / HF) (Clostridium sticklandii)).